We begin with the raw amino-acid sequence, 590 residues long: Arginine--tRNA ligase (590 aa).

The 'HIGH' region signature appears at 130–140 (PNIAKEMHVGH).

It belongs to the class-I aminoacyl-tRNA synthetase family. In terms of assembly, monomer.

It is found in the cytoplasm. It carries out the reaction tRNA(Arg) + L-arginine + ATP = L-arginyl-tRNA(Arg) + AMP + diphosphate. This Synechococcus sp. (strain CC9605) protein is Arginine--tRNA ligase.